The chain runs to 647 residues: MEGRGPYRIYDPGGSTPLGEVSAAFERLVEENTRLKGKMQGIKMLGELLEESQMEASRLRQKAEELVKDSELSPPTSAPSLVSFDDLAELTGQDTKVQVHPATSTAATTTATATTGNSMEKPEPASKSPSNGASSDFEVVPTEEQNSPETGSHPTNMMDLGPPPPEDSNLKLHLQRLETTLSVCAEEPDHSQLFTHLGRMALEFNRLASKVHKNEQRTSILQTLCEQLRQENEALKAKLDKGLEQRDLAAERLREENTELKKLLMNSSCKEGLCGQPSSPKPEGAGKKGVAGQQQASVMASKVPEAGAFGAAEKKVKLLEQQRMELLEVNKQWDQHFRSMKQQYEQKITELRQKLVDLQKQVTELEAEREQKQRDFDRKLLLAKSKIEMEETDKEQLTAEAKELRQKVRYLQDQLSPLTRQREYQEKEIQRLNKALEEALSIQASPSSPPAAFGSPEGVGGHLRKQELVTQNELLKQQVKIFEEDFQRERSDRERMNEEKEELKKQVEKLQAQVTLTNAQLKTLKEEEKAKEALKQQKRKAKASGERYHMEPHPEHVCGAYPYAYPPMPAMVPHHAYKDWSQIRYPPPPVPMEHPPPHPNSRLFHLPEYTWRPPCAGIRNQSSQVMDPPPDRPAEPESADNDCDGPQ.

Residues 39-72 are a coiled coil; it reads MQGIKMLGELLEESQMEASRLRQKAEELVKDSEL. The span at 61 to 71 shows a compositional bias: basic and acidic residues; that stretch reads QKAEELVKDSE. Residues 61-168 are disordered; the sequence is QKAEELVKDS…DLGPPPPEDS (108 aa). Serine 77 is modified (phosphoserine). Residues 95 to 425 form an interaction with Nef region; sequence TKVQVHPATS…SPLTRQREYQ (331 aa). Low complexity predominate over residues 102–115; it reads ATSTAATTTATATT. Residues 143-155 are compositionally biased toward polar residues; that stretch reads EEQNSPETGSHPT. The stretch at 209–270 forms a coiled coil; sequence SKVHKNEQRT…KKLLMNSSCK (62 aa). A phosphoserine mark is found at serine 297, serine 416, and serine 455. Residues 311–551 are a coiled coil; the sequence is AAEKKVKLLE…KASGERYHME (241 aa). The required for inhibitory activity of TNF-induced NF-kappa-B activation stretch occupies residues 444 to 601; that stretch reads ASPSSPPAAF…MEHPPPHPNS (158 aa). Residues 465–523 form a ubiquitin-binding domain (UBD) region; the sequence is KQELVTQNELLKQQVKIFEEDFQRERSDRERMNEEKEELKKQVEKLQAQVTLTNAQLKT. The Nuclear localization signal motif lies at 537–543; sequence QKRKAKA. Tyrosine 565 is subject to Phosphotyrosine. Position 584 is an asymmetric dimethylarginine (arginine 584). Asymmetric dimethylarginine; alternate is present on arginine 612. Arginine 612 carries the omega-N-methylarginine; alternate modification. Residues 613–647 are disordered; that stretch reads PPCAGIRNQSSQVMDPPPDRPAEPESADNDCDGPQ. The span at 637–647 shows a compositional bias: acidic residues; it reads ESADNDCDGPQ. At serine 638 the chain carries Phosphoserine.

In terms of assembly, interacts with TNFAIP3 and IKBKG (polyubiquitinated); facilitates TNFAIP3-mediated de-ubiquitination of NEMO/IKBKG. Interacts with polyubiquitin. Interacts with MAPK1, SELPLG and PIK3CD. Interacts with IRAK1 (polyubiquitinated). Interacts with MYD88; the interaction is indicative for participation in an activated TLR-signaling complex. Interacts with TAX1BP1. Post-translationally, phosphorylation at Tyr-565 by SRC-family kinases recruits phosphoinositide-3-kinase (PI3K) PIK3CD:p85 heterodimer which results in integrin activation and leukocyte adhesion to activated endothelium during inflammation. In terms of tissue distribution, ubiquitous. Abundant in heart and skeletal muscle and expressed at lower levels in thymus, liver, kidney, brain and intestinal tract.

Its subcellular location is the cytoplasm. It localises to the nucleus. Its function is as follows. Inhibits NF-kappa-B activation and TNF-induced NF-kappa-B-dependent gene expression by regulating TAX1BP1 and A20/TNFAIP3-mediated deubiquitination of IKBKG; proposed to link A20/TNFAIP3 to ubiquitinated IKBKG. Involved in regulation of EGF-induced ERK1/ERK2 signaling pathway; blocks MAPK3/MAPK1 nuclear translocation and MAPK1-dependent transcription. Increases cell surface CD4(T4) antigen expression. Involved in the anti-inflammatory response of macrophages and positively regulates TLR-induced activation of CEBPB. Involved in the prevention of autoimmunity; this function implicates binding to polyubiquitin. Involved in leukocyte integrin activation during inflammation; this function is mediated by association with SELPLG and dependent on phosphorylation by SRC-family kinases. In Mus musculus (Mouse), this protein is TNFAIP3-interacting protein 1 (Tnip1).